We begin with the raw amino-acid sequence, 296 residues long: Protein FAM221A (296 aa).

Residues Met-235–Asp-263 form a disordered region. Polar residues predominate over residues Pro-237–Ser-256.

It belongs to the FAM221 family.

This is Protein FAM221A (Fam221a) from Rattus norvegicus (Rat).